The sequence spans 187 residues: Cytochrome c oxidase assembly protein CtaG (187 aa).

Residues 1-9 (MSKKSNKNL) are Cytoplasmic-facing. Residues 10–30 (AFSLLGLIISMVLLSFASVPI) traverse the membrane as a helical; Signal-anchor for type II membrane protein segment. At 31–187 (YNLFCKVTGY…IASLRGNTKY (157 aa)) the chain is on the periplasmic side.

The protein belongs to the COX11/CtaG family.

It is found in the cell inner membrane. Exerts its effect at some terminal stage of cytochrome c oxidase synthesis, probably by being involved in the insertion of the copper B into subunit I. The polypeptide is Cytochrome c oxidase assembly protein CtaG (Rickettsia felis (strain ATCC VR-1525 / URRWXCal2) (Rickettsia azadi)).